A 209-amino-acid chain; its full sequence is Uracil phosphoribosyltransferase (209 aa).

5-phospho-alpha-D-ribose 1-diphosphate contacts are provided by residues R79, R104, and 131–139 (DPMLATGAS). Residues I194 and 199–201 (GDA) each bind uracil. D200 contributes to the 5-phospho-alpha-D-ribose 1-diphosphate binding site.

The protein belongs to the UPRTase family. Requires Mg(2+) as cofactor.

The catalysed reaction is UMP + diphosphate = 5-phospho-alpha-D-ribose 1-diphosphate + uracil. The protein operates within pyrimidine metabolism; UMP biosynthesis via salvage pathway; UMP from uracil: step 1/1. Its activity is regulated as follows. Allosterically activated by GTP. In terms of biological role, catalyzes the conversion of uracil and 5-phospho-alpha-D-ribose 1-diphosphate (PRPP) to UMP and diphosphate. The sequence is that of Uracil phosphoribosyltransferase from Staphylococcus aureus (strain JH1).